Here is a 233-residue protein sequence, read N- to C-terminus: RNA-free ribonuclease P (233 aa).

It belongs to the HARP family.

It carries out the reaction Endonucleolytic cleavage of RNA, removing 5'-extranucleotides from tRNA precursor.. In terms of biological role, RNA-free RNase P that catalyzes the removal of the 5'-leader sequence from pre-tRNA to produce the mature 5'-terminus. The sequence is that of RNA-free ribonuclease P from Methanocaldococcus jannaschii (strain ATCC 43067 / DSM 2661 / JAL-1 / JCM 10045 / NBRC 100440) (Methanococcus jannaschii).